A 566-amino-acid chain; its full sequence is Erythroid membrane-associated protein (566 aa).

The first 29 residues, 1 to 29, serve as a signal peptide directing secretion; sequence MERPSPCGSWLVGCLFTIAVFQPPVQVLG. An Ig-like V-type domain is found at 30-139; it reads DAGKVYIAPL…SSREDNVTLQ (110 aa). At 30 to 246 the chain is on the extracellular side; it reads DAGKVYIAPL…PERGSLSSPA (217 aa). Cys47 and Cys123 are joined by a disulfide. N-linked (GlcNAc...) asparagine glycans are attached at residues Asn135 and Asn214. A helical membrane pass occupies residues 247-267; sequence VALSVVLPVLGLLILLGIWLI. Over 268 to 566 the chain is Cytoplasmic; the sequence is CKQKKSKEKL…ALKGLKVPSL (299 aa). The 199-residue stretch at 311 to 509 folds into the B30.2/SPRY domain; sequence KLKRAAANAG…LIICTELQKS (199 aa). The residue at position 509 (Ser509) is a Phosphoserine.

This sequence belongs to the immunoglobulin superfamily. BTN/MOG family. In terms of processing, glycosylated. As to expression, expressed in spleen and bone marrow.

The protein resides in the cell membrane. The protein localises to the cytoplasm. Functionally, possible role as a cell-adhesion or receptor molecule of erythroid cells. The sequence is that of Erythroid membrane-associated protein (Ermap) from Mus musculus (Mouse).